The sequence spans 566 residues: Proline--tRNA ligase (566 aa).

This sequence belongs to the class-II aminoacyl-tRNA synthetase family. ProS type 1 subfamily. In terms of assembly, homodimer.

The protein localises to the cytoplasm. It carries out the reaction tRNA(Pro) + L-proline + ATP = L-prolyl-tRNA(Pro) + AMP + diphosphate. In terms of biological role, catalyzes the attachment of proline to tRNA(Pro) in a two-step reaction: proline is first activated by ATP to form Pro-AMP and then transferred to the acceptor end of tRNA(Pro). As ProRS can inadvertently accommodate and process non-cognate amino acids such as alanine and cysteine, to avoid such errors it has two additional distinct editing activities against alanine. One activity is designated as 'pretransfer' editing and involves the tRNA(Pro)-independent hydrolysis of activated Ala-AMP. The other activity is designated 'posttransfer' editing and involves deacylation of mischarged Ala-tRNA(Pro). The misacylated Cys-tRNA(Pro) is not edited by ProRS. This Exiguobacterium sibiricum (strain DSM 17290 / CCUG 55495 / CIP 109462 / JCM 13490 / 255-15) protein is Proline--tRNA ligase.